We begin with the raw amino-acid sequence, 452 residues long: Tubulin alpha-1D chain (452 aa).

The MREC motif motif lies at 1–4 (MREC). Gln-11 contributes to the GTP binding site. Lys-40 is subject to N6-acetyllysine. Glu-71, Ser-140, Gly-144, Thr-145, Thr-179, Asn-206, and Asn-228 together coordinate GTP. Glu-71 serves as a coordination point for Mg(2+). Residue Glu-254 is part of the active site. Tyr-282 bears the 3'-nitrotyrosine mark. Residues 432–452 (YEEVGMDSVEGEGEEEEGDEY) are disordered. Ser-439 carries the post-translational modification Phosphoserine. At Glu-446 the chain carries 5-glutamyl polyglutamate. Residue Tyr-452 is modified to 3'-nitrotyrosine.

Belongs to the tubulin family. In terms of assembly, dimer of alpha and beta chains. A typical microtubule is a hollow water-filled tube with an outer diameter of 25 nm and an inner diameter of 15 nM. Alpha-beta heterodimers associate head-to-tail to form protofilaments running lengthwise along the microtubule wall with the beta-tubulin subunit facing the microtubule plus end conferring a structural polarity. Microtubules usually have 13 protofilaments but different protofilament numbers can be found in some organisms and specialized cells. Mg(2+) is required as a cofactor. In terms of processing, some glutamate residues at the C-terminus are polyglycylated, resulting in polyglycine chains on the gamma-carboxyl group. Glycylation is mainly limited to tubulin incorporated into axonemes (cilia and flagella) whereas glutamylation is prevalent in neuronal cells, centrioles, axonemes, and the mitotic spindle. Both modifications can coexist on the same protein on adjacent residues, and lowering polyglycylation levels increases polyglutamylation, and reciprocally. Cilia and flagella glycylation is required for their stability and maintenance. Flagella glycylation controls sperm motility. Some glutamate residues at the C-terminus are polyglutamylated, resulting in polyglutamate chains on the gamma-carboxyl group. Polyglutamylation plays a key role in microtubule severing by spastin (SPAST). SPAST preferentially recognizes and acts on microtubules decorated with short polyglutamate tails: severing activity by SPAST increases as the number of glutamates per tubulin rises from one to eight, but decreases beyond this glutamylation threshold. Glutamylation is also involved in cilia motility. Post-translationally, acetylation of alpha chains at Lys-40 is located inside the microtubule lumen. This modification has been correlated with increased microtubule stability, intracellular transport and ciliary assembly. In terms of processing, methylation of alpha chains at Lys-40 is found in mitotic microtubules and is required for normal mitosis and cytokinesis contributing to genomic stability. Nitration of Tyr-452 is irreversible and interferes with normal dynein intracellular distribution. Post-translationally, undergoes a tyrosination/detyrosination cycle, the cyclic removal and re-addition of a C-terminal tyrosine residue by the enzymes tubulin tyrosine carboxypeptidase (MATCAP, VASH1 or VASH2) and tubulin tyrosine ligase (TTL), respectively. In terms of processing, tyrosination promotes microtubule interaction with CAP-Gly domain-containing proteins such as CLIP1, CLIP2 and DCTN1. Tyrosination regulates the initiation of dynein-dynactin motility via interaction with DCTN1, which brings the dynein-dynactin complex into contact with microtubules. In neurons, tyrosinated tubulins mediate the initiation of retrograde vesicle transport. Detyrosination is involved in metaphase plate congression by guiding chromosomes during mitosis: detyrosination promotes interaction with CENPE, promoting pole-proximal transport of chromosomes toward the equator. Detyrosination increases microtubules-dependent mechanotransduction in dystrophic cardiac and skeletal muscle. In cardiomyocytes, detyrosinated microtubules are required to resist to contractile compression during contraction: detyrosination promotes association with desmin (DES) at force-generating sarcomeres, leading to buckled microtubules and mechanical resistance to contraction.

It localises to the cytoplasm. Its subcellular location is the cytoskeleton. The enzyme catalyses GTP + H2O = GDP + phosphate + H(+). Tubulin is the major constituent of microtubules, a cylinder consisting of laterally associated linear protofilaments composed of alpha- and beta-tubulin heterodimers. Microtubules grow by the addition of GTP-tubulin dimers to the microtubule end, where a stabilizing cap forms. Below the cap, tubulin dimers are in GDP-bound state, owing to GTPase activity of alpha-tubulin. The sequence is that of Tubulin alpha-1D chain (TUBA1D) from Bos taurus (Bovine).